Consider the following 405-residue polypeptide: L-cysteine:1D-myo-inositol 2-amino-2-deoxy-alpha-D-glucopyranoside ligase (405 aa).

Residue C43 participates in Zn(2+) binding. Residues 43 to 46 (CGIT), T58, and 81 to 83 (NIT) each bind L-cysteinyl-5'-AMP. The 'HIGH' region signature appears at 45–55 (ITPYDATHLGH). The short motif at 187–192 (ERGGDP) is the 'ERGGDP' region element. W227 contributes to the L-cysteinyl-5'-AMP binding site. C231 provides a ligand contact to Zn(2+). 249–251 (GSD) contributes to the L-cysteinyl-5'-AMP binding site. Residue H256 coordinates Zn(2+). I283 is a binding site for L-cysteinyl-5'-AMP. A 'KMSKS' region motif is present at residues 289–293 (KMSKS).

This sequence belongs to the class-I aminoacyl-tRNA synthetase family. MshC subfamily. As to quaternary structure, monomer. Requires Zn(2+) as cofactor.

The enzyme catalyses 1D-myo-inositol 2-amino-2-deoxy-alpha-D-glucopyranoside + L-cysteine + ATP = 1D-myo-inositol 2-(L-cysteinylamino)-2-deoxy-alpha-D-glucopyranoside + AMP + diphosphate + H(+). Catalyzes the ATP-dependent condensation of GlcN-Ins and L-cysteine to form L-Cys-GlcN-Ins. This Nakamurella multipartita (strain ATCC 700099 / DSM 44233 / CIP 104796 / JCM 9543 / NBRC 105858 / Y-104) (Microsphaera multipartita) protein is L-cysteine:1D-myo-inositol 2-amino-2-deoxy-alpha-D-glucopyranoside ligase.